We begin with the raw amino-acid sequence, 728 residues long: U-box domain-containing protein 4 (728 aa).

Residues 296–370 (SVPKEFSCPI…SQWCGVYGLQ (75 aa)) form the U-box domain. 2 ARM repeats span residues 441–483 (GAIP…EQEG) and 526–568 (GAVE…ESCA).

It carries out the reaction S-ubiquitinyl-[E2 ubiquitin-conjugating enzyme]-L-cysteine + [acceptor protein]-L-lysine = [E2 ubiquitin-conjugating enzyme]-L-cysteine + N(6)-ubiquitinyl-[acceptor protein]-L-lysine.. Its pathway is protein modification; protein ubiquitination. Possesses E3 ubiquitin-protein ligase in vitro. The chain is U-box domain-containing protein 4 (PUB4) from Oryza sativa subsp. japonica (Rice).